Consider the following 569-residue polypeptide: Methionine--tRNA ligase (569 aa).

The 'HIGH' region signature appears at 11–21 (PYINGVKHLGN). Zn(2+) is bound by residues Cys143, Cys146, Cys156, and Cys159. Residues 342–346 (KFSTS) carry the 'KMSKS' region motif. Residue Thr345 coordinates ATP.

This sequence belongs to the class-I aminoacyl-tRNA synthetase family. MetG type 1 subfamily. In terms of assembly, monomer. It depends on Zn(2+) as a cofactor.

The protein localises to the cytoplasm. It carries out the reaction tRNA(Met) + L-methionine + ATP = L-methionyl-tRNA(Met) + AMP + diphosphate. Functionally, is required not only for elongation of protein synthesis but also for the initiation of all mRNA translation through initiator tRNA(fMet) aminoacylation. The chain is Methionine--tRNA ligase from Caulobacter sp. (strain K31).